The chain runs to 208 residues: Ribonuclease HII (208 aa).

The region spanning 12–201 (ELVAGVDEVG…VRALLEPVAV (190 aa)) is the RNase H type-2 domain. D18, E19, and D110 together coordinate a divalent metal cation.

It belongs to the RNase HII family. It depends on Mn(2+) as a cofactor. The cofactor is Mg(2+).

The protein resides in the cytoplasm. The enzyme catalyses Endonucleolytic cleavage to 5'-phosphomonoester.. Functionally, endonuclease that specifically degrades the RNA of RNA-DNA hybrids. In Ectopseudomonas mendocina (strain ymp) (Pseudomonas mendocina), this protein is Ribonuclease HII.